A 301-amino-acid chain; its full sequence is 2-aminobenzoylacetyl-CoA thioesterase (301 aa).

Fe cation contacts are provided by histidine 69, histidine 71, aspartate 73, histidine 74, histidine 159, aspartate 178, and histidine 221.

It belongs to the metallo-beta-lactamase superfamily.

The catalysed reaction is (2-aminobenzoyl)acetyl-CoA + H2O = (2-aminobenzoyl)acetate + CoA + H(+). Its activity is regulated as follows. Thioesterase activity, but not pyocyanine production, is inhibited by 2-(pyridin-3-yl)benzoic acid, 2-(1H-pyrrol-1-yl)benzoic acid and 3-methylthiophene-2-carboxylic acid. Compounds bind to the active center. In terms of biological role, required for the biosynthesis of the quorum-sensing signaling molecules 2-heptyl-4(1H)-quinolone (HHQ) and 2-heptyl-3-hydroxy-4(1H)-quinolone (Pseudomonas quinolone signal or PQS), which are important for biofilm formation and virulence. Catalyzes the hydrolysis of the intermediate 2-aminobenzoylacetyl-CoA (2-ABA-CoA) to form 2-aminobenzoylacetate (2-ABA), the precursor of HHQ. In vitro, can also hydrolyze other substrates such as S-ethyl-acetothioacetate and acetoacetyl-CoA, but is inactive against anthraniloyl-CoA, malonyl-CoA and octanoyl-CoA. Beyond its thioesterase function, is involved in the regulation of diverse genes coding for key virulence determinants and biofilm development. This chain is 2-aminobenzoylacetyl-CoA thioesterase, found in Pseudomonas aeruginosa (strain ATCC 15692 / DSM 22644 / CIP 104116 / JCM 14847 / LMG 12228 / 1C / PRS 101 / PAO1).